Here is a 403-residue protein sequence, read N- to C-terminus: NADH-quinone oxidoreductase subunit D (403 aa).

This sequence belongs to the complex I 49 kDa subunit family. As to quaternary structure, NDH-1 is composed of 15 different subunits. Subunits NuoB, C, D, E, F, and G constitute the peripheral sector of the complex.

The protein localises to the cell membrane. The catalysed reaction is a quinone + NADH + 5 H(+)(in) = a quinol + NAD(+) + 4 H(+)(out). Functionally, NDH-1 shuttles electrons from NADH, via FMN and iron-sulfur (Fe-S) centers, to quinones in the respiratory chain. The immediate electron acceptor for the enzyme in this species is believed to be a menaquinone. Couples the redox reaction to proton translocation (for every two electrons transferred, four hydrogen ions are translocated across the cytoplasmic membrane), and thus conserves the redox energy in a proton gradient. The polypeptide is NADH-quinone oxidoreductase subunit D (Deinococcus geothermalis (strain DSM 11300 / CIP 105573 / AG-3a)).